The sequence spans 407 residues: MKRVFLIVLDSFGIGSSPDADKFNDVGSNTFGHIVEKCFLGEANVGRKGVLCIPNLVKLGIINAAKESTGQYPLGFNYSSNVIASYGFASEISSGKDTTSGHWEIAGVPVLDDWCYFKEKQNSFPESLLEKIIRRSELTGFIGNCHASGTDIISRLGEEHIQTKKPIVYTSSDSVFQIACHEEFFGLSNLYKLCKTVRFILDRYNYKVARVIARPFIGNDKLQFQRTGNRRDFSIKPFATTVIKKLIDEKQGQVIAIGKVSDIYGGIGISKNIKSTGLYELCSTTIHEMKKALNNTIVFTNLVDFDSNWGHRRDVSGYAKGLELFDSRLSEIISLVQKNDLLILTADHGCDPTWIGTDHTRENVPVLIYSPGIKKNFLGHRKTFADIGQTIAKYFLLTDMSYGQNML.

Mn(2+) contacts are provided by Asp-10, Asp-306, His-311, Asp-347, His-348, and His-359.

This sequence belongs to the phosphopentomutase family. The cofactor is Mn(2+).

It localises to the cytoplasm. The enzyme catalyses 2-deoxy-alpha-D-ribose 1-phosphate = 2-deoxy-D-ribose 5-phosphate. The catalysed reaction is alpha-D-ribose 1-phosphate = D-ribose 5-phosphate. The protein operates within carbohydrate degradation; 2-deoxy-D-ribose 1-phosphate degradation; D-glyceraldehyde 3-phosphate and acetaldehyde from 2-deoxy-alpha-D-ribose 1-phosphate: step 1/2. In terms of biological role, isomerase that catalyzes the conversion of deoxy-ribose 1-phosphate (dRib-1-P) and ribose 1-phosphate (Rib-1-P) to deoxy-ribose 5-phosphate (dRib-5-P) and ribose 5-phosphate (Rib-5-P), respectively. This chain is Phosphopentomutase, found in Buchnera aphidicola subsp. Acyrthosiphon pisum (strain Tuc7).